A 544-amino-acid polypeptide reads, in one-letter code: CTP synthase (544 aa).

An amidoligase domain region spans residues 1 to 266; sequence MKYIFVTGGV…GKAVEELLGL (266 aa). Serine 12 contacts CTP. Serine 12 is a UTP binding site. ATP is bound at residue 13 to 18; sequence SLGKGV. Tyrosine 53 serves as a coordination point for L-glutamine. Aspartate 70 lines the ATP pocket. Residues aspartate 70 and glutamate 140 each coordinate Mg(2+). CTP-binding positions include 147 to 149, 187 to 192, and lysine 223; these read DIE and KTKPTQ. UTP contacts are provided by residues 187–192 and lysine 223; that span reads KTKPTQ. The Glutamine amidotransferase type-1 domain occupies 291–544; it reads TIAIAGKYTA…VKAALEHQQQ (254 aa). Glycine 356 serves as a coordination point for L-glutamine. Cysteine 383 functions as the Nucleophile; for glutamine hydrolysis in the catalytic mechanism. Residues 384–387, glutamate 407, and arginine 467 each bind L-glutamine; that span reads LGMQ. Catalysis depends on residues histidine 517 and glutamate 519.

It belongs to the CTP synthase family. Homotetramer.

The enzyme catalyses UTP + L-glutamine + ATP + H2O = CTP + L-glutamate + ADP + phosphate + 2 H(+). It catalyses the reaction L-glutamine + H2O = L-glutamate + NH4(+). It carries out the reaction UTP + NH4(+) + ATP = CTP + ADP + phosphate + 2 H(+). Its pathway is pyrimidine metabolism; CTP biosynthesis via de novo pathway; CTP from UDP: step 2/2. With respect to regulation, allosterically activated by GTP, when glutamine is the substrate; GTP has no effect on the reaction when ammonia is the substrate. The allosteric effector GTP functions by stabilizing the protein conformation that binds the tetrahedral intermediate(s) formed during glutamine hydrolysis. Inhibited by the product CTP, via allosteric rather than competitive inhibition. In terms of biological role, catalyzes the ATP-dependent amination of UTP to CTP with either L-glutamine or ammonia as the source of nitrogen. Regulates intracellular CTP levels through interactions with the four ribonucleotide triphosphates. In Deinococcus radiodurans (strain ATCC 13939 / DSM 20539 / JCM 16871 / CCUG 27074 / LMG 4051 / NBRC 15346 / NCIMB 9279 / VKM B-1422 / R1), this protein is CTP synthase.